Consider the following 329-residue polypeptide: DNA-directed RNA polymerase subunit alpha (329 aa).

Residues 1–234 (MQGSVTEFLR…EQLDAFVELR (234 aa)) form an alpha N-terminal domain (alpha-NTD) region. The interval 248–329 (FDPILLRPVD…WPPASLVDDL (82 aa)) is alpha C-terminal domain (alpha-CTD).

This sequence belongs to the RNA polymerase alpha chain family. As to quaternary structure, homodimer. The RNAP catalytic core consists of 2 alpha, 1 beta, 1 beta' and 1 omega subunit. When a sigma factor is associated with the core the holoenzyme is formed, which can initiate transcription.

The enzyme catalyses RNA(n) + a ribonucleoside 5'-triphosphate = RNA(n+1) + diphosphate. DNA-dependent RNA polymerase catalyzes the transcription of DNA into RNA using the four ribonucleoside triphosphates as substrates. This is DNA-directed RNA polymerase subunit alpha from Shewanella violacea (strain JCM 10179 / CIP 106290 / LMG 19151 / DSS12).